A 338-amino-acid polypeptide reads, in one-letter code: Glycerol-3-phosphate dehydrogenase [NAD(P)+] (338 aa).

Serine 13, tryptophan 14, and lysine 108 together coordinate NADPH. Sn-glycerol 3-phosphate is bound by residues lysine 108, glycine 139, and serine 141. Alanine 143 lines the NADPH pocket. Positions 194, 247, 257, 258, and 259 each coordinate sn-glycerol 3-phosphate. Catalysis depends on lysine 194, which acts as the Proton acceptor. NADPH is bound at residue arginine 258. Residues valine 282 and glutamate 284 each contribute to the NADPH site.

It belongs to the NAD-dependent glycerol-3-phosphate dehydrogenase family.

It is found in the cytoplasm. It carries out the reaction sn-glycerol 3-phosphate + NAD(+) = dihydroxyacetone phosphate + NADH + H(+). It catalyses the reaction sn-glycerol 3-phosphate + NADP(+) = dihydroxyacetone phosphate + NADPH + H(+). The protein operates within membrane lipid metabolism; glycerophospholipid metabolism. Catalyzes the reduction of the glycolytic intermediate dihydroxyacetone phosphate (DHAP) to sn-glycerol 3-phosphate (G3P), the key precursor for phospholipid synthesis. This Streptococcus pyogenes serotype M12 (strain MGAS9429) protein is Glycerol-3-phosphate dehydrogenase [NAD(P)+].